Consider the following 434-residue polypeptide: Na(+)/H(+) antiporter NhaA 1 (434 aa).

The segment covering 1-15 (MISPNPALPTPPHAP) has biased composition (pro residues). Residues 1–21 (MISPNPALPTPPHAPTAPGRG) form a disordered region. 12 helical membrane passes run 34 to 54 (GGIL…SPAA), 74 to 94 (LSVS…VVGL), 112 to 132 (ALPI…FTLI), 143 to 163 (GWAI…AVVG), 173 to 193 (FLLT…AVFY), 196 to 216 (GIAF…GILV), 222 to 242 (AWYV…ASGI), 245 to 265 (TIAG…RAGV), 294 to 314 (IAVP…LEGL), 326 to 346 (IIVA…LLVA), 362 to 382 (VLGL…VGEL), and 393 to 413 (AVKV…GTLL).

It belongs to the NhaA Na(+)/H(+) (TC 2.A.33) antiporter family.

Its subcellular location is the cell membrane. It carries out the reaction Na(+)(in) + 2 H(+)(out) = Na(+)(out) + 2 H(+)(in). Na(+)/H(+) antiporter that extrudes sodium in exchange for external protons. In Clavibacter michiganensis subsp. michiganensis (strain NCPPB 382), this protein is Na(+)/H(+) antiporter NhaA 1.